The chain runs to 493 residues: MVKGKKPYIDRKKAVTFHLVHRSQHDPLVTDENAPQRVLLEAAARQQKPKDPEPPTDPAQRQEELKKFGIHFDDDYDYMQHLKKRENDVVWEFMENPNQARKQKVQDSEKPGPAPKLMLPSSVFASEFEESEGMLNKAAPQTLRLDWDPDVVAALDSDCENEELEDDFVIQAMAEGDSDDEEWDDEDGEEQSDMDFDSDDLNEDENEDELMDRLAPLMRERRFDDEEVKSRFTEYSMSSSVIRRNEQLSLLDDRFEKFYATYDDPELGDLALEDIEGNWHQKHPVVMQCFQEFKKKDKGIEYNKEWDRERIEKYRNVVEGEEDPTEELVEYEVDDPKQKKWDCESILSTYSNIYNHPKVIDEPRRSRRSSASTNPAPIQIDPKTGLPTNVLRGGVDGQLTAKALANLADESPAATGPKSLCAKSVLSTLSVLSIRPKDETHEEKKERKRLLKDYRNERRIEKKANTEAFKEEKKRQTHVKINQRTNQQGASIV.

Disordered regions lie at residues 42–63, 97–119, and 170–207; these read AAAR…QRQE, PNQA…KLML, and IQAM…DENE. Over residues 176–207 the composition is skewed to acidic residues; sequence GDSDDEEWDDEDGEEQSDMDFDSDDLNEDENE. Phosphoserine is present on residues S345, S369, S370, S424, and S427. Residues 359 to 387 are disordered; it reads VIDEPRRSRRSSASTNPAPIQIDPKTGLP. A coiled-coil region spans residues 437–468; sequence KDETHEEKKERKRLLKDYRNERRIEKKANTEA. Basic and acidic residues predominate over residues 465–474; the sequence is NTEAFKEEKK. Positions 465–493 are disordered; sequence NTEAFKEEKKRQTHVKINQRTNQQGASIV. Over residues 479 to 493 the composition is skewed to polar residues; sequence VKINQRTNQQGASIV.

The protein belongs to the LTV1 family. In terms of assembly, interacts with RpS3; the interaction is RNA-independent. Associates with free 40S ribosome subunits.

The protein localises to the cytoplasm. Its function is as follows. Necessary for the biogenesis of 40S ribosome subunits by regulating pre-rRNA processing. Non-ribosomal factor required for efficient nuclear export of the ribosomal 40S subunit. Necessary for endoreplication driven by Myc. The protein is Protein LTV1 homolog of Drosophila melanogaster (Fruit fly).